A 1499-amino-acid polypeptide reads, in one-letter code: Collagen alpha-2(V) chain (1499 aa).

The first 26 residues, 1-26 (MMANWAEARPLLILIVLLGQFVSIKA), serve as a signal peptide directing secretion. The VWFC domain maps to 39-97 (IACTQNGQMYLNRDIWKPAPCQICVCDNGAILCDKIECQDVLDCADPVTPPGECCPVCS). A disordered region spans residues 104 to 1268 (NTNFGRGRKG…DDKNKTDPGV (1165 aa)). Over residues 170–182 (PGAPGPPGHPSHP) the composition is skewed to pro residues. Residues 212 to 227 (PGSVGPVGPRGPQGLQ) are compositionally biased toward low complexity. Residues 236–248 (TGPPGEPGDPGPM) are compositionally biased toward pro residues. Hydroxyproline occurs at positions 290, 293, and 296. 2 stretches are compositionally biased toward low complexity: residues 322-340 (EAGP…PRGM) and 427-443 (TPGA…SGPP). Positions 506 to 508 (RGD) match the Cell attachment site motif. Composition is skewed to low complexity over residues 604-626 (SIGI…SGDP) and 694-709 (DQGV…PLGP). Hydroxyproline occurs at positions 611 and 617. Residues 710-721 (RGERGNPGERGE) show a composition bias toward basic and acidic residues. A compositionally biased stretch (gly residues) spans 732–741 (GMAGGHGPDG). The segment covering 742-758 (PKGSPGPSGTPGDTGPP) has biased composition (low complexity). Positions 776 to 787 (KGDRGGIGEKGA) are enriched in basic and acidic residues. A compositionally biased stretch (low complexity) spans 826 to 841 (PPGSRGNPGSRGENGP). Residues 894 to 903 (GLKGGRGTQG) are compositionally biased toward gly residues. 3-hydroxyproline; partial is present on P919. A compositionally biased stretch (pro residues) spans 919-929 (PPGPAGAPGPA). 6 consecutive short sequence motifs (cell attachment site) follow at residues 944-946 (RGD), 1067-1069 (RGD), 1070-1072 (RGD), 1100-1102 (RGD), 1127-1129 (RGD), and 1136-1138 (RGD). Residues 1063-1072 (AVGERGDRGD) show a composition bias toward basic and acidic residues. Residues 1093-1114 (APGDAGQRGDPGSRGPIGPPGR) are compositionally biased toward low complexity. The segment covering 1127 to 1141 (RGDKGDHGDRGDRGQ) has biased composition (basic and acidic residues). Residue P1156 is modified to 3-hydroxyproline; partial. Composition is skewed to pro residues over residues 1171–1181 (PFGPRGPPGPV) and 1211–1226 (EGPP…PGPP). A propeptide spans 1230–1499 (TAALGDIMGH…GVEIGPVCFV (270 aa)) (C-terminal propeptide). The N-linked (GlcNAc...) asparagine glycan is linked to N1262. Positions 1266–1499 (PGVHATLKSL…GVEIGPVCFV (234 aa)) constitute a Fibrillar collagen NC1 domain. 3 disulfide bridges follow: C1296-C1328, C1336-C1497, and C1405-C1450. Ca(2+)-binding residues include D1314, N1316, Q1317, and D1322. A glycan (N-linked (GlcNAc...) asparagine) is linked at N1400.

Belongs to the fibrillar collagen family. Trimers of two alpha 1(V) and one alpha 2(V) chains in most tissues and trimers of one alpha 1(V), one alpha 2(V), and one alpha 3(V) chains in placenta. Post-translationally, prolines at the third position of the tripeptide repeating unit (G-X-P) are hydroxylated in some or all of the chains. Probably 3-hydroxylated on Pro-919 and Pro-1156 by LEPREL1.

The protein resides in the secreted. Its subcellular location is the extracellular space. It is found in the extracellular matrix. In terms of biological role, type V collagen is a member of group I collagen (fibrillar forming collagen). It is a minor connective tissue component of nearly ubiquitous distribution. Type V collagen binds to DNA, heparan sulfate, thrombospondin, heparin, and insulin. Type V collagen is a key determinant in the assembly of tissue-specific matrices. The chain is Collagen alpha-2(V) chain (COL5A2) from Homo sapiens (Human).